We begin with the raw amino-acid sequence, 531 residues long: T-complex protein 1 subunit zeta (531 aa).

The residue at position 2 (alanine 2) is an N-acetylalanine. Position 5 is an N6-acetyllysine (lysine 5). Glycine 39 contributes to the ADP binding site. Glycine 39 is an ATP binding site. Aspartate 90 is a binding site for Mg(2+). ADP-binding residues include glycine 91, threonine 92, threonine 93, serine 94, threonine 158, and lysine 159. 3 residues coordinate ATP: glycine 91, threonine 92, and threonine 93. Lysine 199 is modified (N6-acetyllysine). Residue serine 205 is modified to Phosphoserine. Residue lysine 251 forms a Glycyl lysine isopeptide (Lys-Gly) (interchain with G-Cter in SUMO2) linkage. An N6-acetyllysine mark is found at lysine 287, lysine 365, lysine 377, and lysine 388. Alanine 411 contacts ADP. ATP-binding residues include alanine 411, glycine 412, aspartate 496, and lysine 501. Aspartate 496 is an ADP binding site.

It belongs to the TCP-1 chaperonin family. In terms of assembly, component of the chaperonin-containing T-complex (TRiC), a hexadecamer composed of two identical back-to-back stacked rings enclosing a protein folding chamber. Each ring is made up of eight different subunits: TCP1/CCT1, CCT2, CCT3, CCT4, CCT5, CCT6A/CCT6, CCT7, CCT8. Interacts with PACRG.

It is found in the cytoplasm. The catalysed reaction is ATP + H2O = ADP + phosphate + H(+). Component of the chaperonin-containing T-complex (TRiC), a molecular chaperone complex that assists the folding of actin, tubulin and other proteins upon ATP hydrolysis. The TRiC complex mediates the folding of WRAP53/TCAB1, thereby regulating telomere maintenance. The polypeptide is T-complex protein 1 subunit zeta (CCT6) (Oryctolagus cuniculus (Rabbit)).